The chain runs to 268 residues: Shikimate kinase (268 aa).

70 to 80 (PSGYGLKSSSA) contributes to the ATP binding site.

It belongs to the GHMP kinase family. Archaeal shikimate kinase subfamily.

It is found in the cytoplasm. The enzyme catalyses shikimate + ATP = 3-phosphoshikimate + ADP + H(+). It participates in metabolic intermediate biosynthesis; chorismate biosynthesis; chorismate from D-erythrose 4-phosphate and phosphoenolpyruvate: step 5/7. The sequence is that of Shikimate kinase (aroK) from Thermoplasma acidophilum (strain ATCC 25905 / DSM 1728 / JCM 9062 / NBRC 15155 / AMRC-C165).